Here is a 403-residue protein sequence, read N- to C-terminus: Tryptophan synthase beta chain 1 (403 aa).

Lys-93 bears the N6-(pyridoxal phosphate)lysine mark.

It belongs to the TrpB family. Tetramer of two alpha and two beta chains. It depends on pyridoxal 5'-phosphate as a cofactor.

It catalyses the reaction (1S,2R)-1-C-(indol-3-yl)glycerol 3-phosphate + L-serine = D-glyceraldehyde 3-phosphate + L-tryptophan + H2O. It participates in amino-acid biosynthesis; L-tryptophan biosynthesis; L-tryptophan from chorismate: step 5/5. The beta subunit is responsible for the synthesis of L-tryptophan from indole and L-serine. This chain is Tryptophan synthase beta chain 1 (trpB1), found in Methanosarcina acetivorans (strain ATCC 35395 / DSM 2834 / JCM 12185 / C2A).